A 211-amino-acid chain; its full sequence is Imidazole glycerol phosphate synthase subunit HisH (211 aa).

A Glutamine amidotransferase type-1 domain is found at methionine 1–methionine 211. Cysteine 79 serves as the catalytic Nucleophile. Active-site residues include histidine 186 and glutamate 188.

In terms of assembly, heterodimer of HisH and HisF.

The protein localises to the cytoplasm. The catalysed reaction is 5-[(5-phospho-1-deoxy-D-ribulos-1-ylimino)methylamino]-1-(5-phospho-beta-D-ribosyl)imidazole-4-carboxamide + L-glutamine = D-erythro-1-(imidazol-4-yl)glycerol 3-phosphate + 5-amino-1-(5-phospho-beta-D-ribosyl)imidazole-4-carboxamide + L-glutamate + H(+). It catalyses the reaction L-glutamine + H2O = L-glutamate + NH4(+). It functions in the pathway amino-acid biosynthesis; L-histidine biosynthesis; L-histidine from 5-phospho-alpha-D-ribose 1-diphosphate: step 5/9. IGPS catalyzes the conversion of PRFAR and glutamine to IGP, AICAR and glutamate. The HisH subunit catalyzes the hydrolysis of glutamine to glutamate and ammonia as part of the synthesis of IGP and AICAR. The resulting ammonia molecule is channeled to the active site of HisF. This chain is Imidazole glycerol phosphate synthase subunit HisH, found in Geobacillus sp. (strain WCH70).